Reading from the N-terminus, the 114-residue chain is PDZK1-interacting protein 1 (114 aa).

Over 1 to 28 (MSALSLVILGLLMAVPPASCQQGLGNLQ) the chain is Extracellular. Residues 29-51 (PWMQGLIAVAVFLVLVAIAFAIN) traverse the membrane as a helical segment. Topologically, residues 52 to 114 (HFWCQEEREP…EEGRVHSTPM (63 aa)) are cytoplasmic. The residue at position 85 (Ser85) is a Phosphoserine. Residues 92–114 (SNEHENAYENTSEEEGRVHSTPM) are disordered. The segment covering 105–114 (EEGRVHSTPM) has biased composition (basic and acidic residues).

This sequence belongs to the PDZK1-interacting protein 1/SMIM24 family. As to quaternary structure, forms a heterodimer (via N-terminal transmembrane helix) with SLC5A2/SGLT2 (via TM13); this interaction enhances SLC5A2 transporter activity. Interacts with PDZK1.

The protein resides in the apical cell membrane. Its function is as follows. Auxiliary protein of electrogenic Na(+)-coupled sugar symporter SLC5A2/SGLT2 and SLC5A1/SGLT1. Essential for the transporter activity of SLC5A2/SGLT2 but not SLC5A1/SGLT1. This chain is PDZK1-interacting protein 1, found in Sus scrofa (Pig).